The chain runs to 244 residues: tRNA pseudouridine synthase A (244 aa).

Asp-52 serves as the catalytic Nucleophile. Tyr-110 serves as a coordination point for substrate.

The protein belongs to the tRNA pseudouridine synthase TruA family. Homodimer.

The catalysed reaction is uridine(38/39/40) in tRNA = pseudouridine(38/39/40) in tRNA. Functionally, formation of pseudouridine at positions 38, 39 and 40 in the anticodon stem and loop of transfer RNAs. The protein is tRNA pseudouridine synthase A of Clostridium kluyveri (strain ATCC 8527 / DSM 555 / NBRC 12016 / NCIMB 10680 / K1).